We begin with the raw amino-acid sequence, 54 residues long: Sperm protamine P3 (54 aa).

Residues 1 to 54 (RRRRRRGKGKGGKKKKGKKRRRRGRKGKGKGKKKGKRKGKRGGKRRRRRRKGKK) are disordered.

Gonads.

It is found in the nucleus. The protein localises to the chromosome. Its function is as follows. Protamines substitute for histones in the chromatin of sperm during the haploid phase of spermatogenesis. They compact sperm DNA into a highly condensed, stable and inactive complex. The chain is Sperm protamine P3 from Bolinus brandaris (Purple dye murex).